The following is a 338-amino-acid chain: Ketol-acid reductoisomerase (NADP(+)) (338 aa).

The region spanning 1 to 181 (MKVFYDKDCD…GGGKGGIIET (181 aa)) is the KARI N-terminal Rossmann domain. NADP(+) contacts are provided by residues 24–27 (YGSQ), arginine 47, and serine 52. Histidine 107 is an active-site residue. NADP(+) is bound at residue glycine 133. A KARI C-terminal knotted domain is found at 182–327 (NFKEETETDL…GQLRAMMPWI (146 aa)). Positions 190, 194, 226, and 230 each coordinate Mg(2+). Serine 251 serves as a coordination point for substrate.

It belongs to the ketol-acid reductoisomerase family. It depends on Mg(2+) as a cofactor.

The enzyme catalyses (2R)-2,3-dihydroxy-3-methylbutanoate + NADP(+) = (2S)-2-acetolactate + NADPH + H(+). It catalyses the reaction (2R,3R)-2,3-dihydroxy-3-methylpentanoate + NADP(+) = (S)-2-ethyl-2-hydroxy-3-oxobutanoate + NADPH + H(+). Its pathway is amino-acid biosynthesis; L-isoleucine biosynthesis; L-isoleucine from 2-oxobutanoate: step 2/4. It functions in the pathway amino-acid biosynthesis; L-valine biosynthesis; L-valine from pyruvate: step 2/4. Involved in the biosynthesis of branched-chain amino acids (BCAA). Catalyzes an alkyl-migration followed by a ketol-acid reduction of (S)-2-acetolactate (S2AL) to yield (R)-2,3-dihydroxy-isovalerate. In the isomerase reaction, S2AL is rearranged via a Mg-dependent methyl migration to produce 3-hydroxy-3-methyl-2-ketobutyrate (HMKB). In the reductase reaction, this 2-ketoacid undergoes a metal-dependent reduction by NADPH to yield (R)-2,3-dihydroxy-isovalerate. In Delftia acidovorans (strain DSM 14801 / SPH-1), this protein is Ketol-acid reductoisomerase (NADP(+)).